Consider the following 428-residue polypeptide: tRNA modification GTPase MnmE (428 aa).

(6S)-5-formyl-5,6,7,8-tetrahydrofolate-binding residues include arginine 20, glutamate 77, and lysine 117. Residues 213-351 (GFEVAIVGSP…LVSRISDTLR (139 aa)) form the TrmE-type G domain. Residues 223–228 (NVGKST), 242–248 (SEYAGTT), and 267–270 (DTAG) contribute to the GTP site. The Mg(2+) site is built by serine 227 and threonine 248. Lysine 428 contributes to the (6S)-5-formyl-5,6,7,8-tetrahydrofolate binding site.

It belongs to the TRAFAC class TrmE-Era-EngA-EngB-Septin-like GTPase superfamily. TrmE GTPase family. As to quaternary structure, homodimer. Heterotetramer of two MnmE and two MnmG subunits. The cofactor is K(+).

It is found in the cytoplasm. Exhibits a very high intrinsic GTPase hydrolysis rate. Involved in the addition of a carboxymethylaminomethyl (cmnm) group at the wobble position (U34) of certain tRNAs, forming tRNA-cmnm(5)s(2)U34. The chain is tRNA modification GTPase MnmE from Ruegeria sp. (strain TM1040) (Silicibacter sp.).